We begin with the raw amino-acid sequence, 352 residues long: Speedy protein E16 (352 aa).

Residues 1–90 (MDRTETRFRK…EPEKELAPEP (90 aa)) form a disordered region. Residues 18-40 (ITTSRQPHPQNEQSPQRSTSGYS) are compositionally biased toward polar residues. Positions 76-90 (DESEEEPEKELAPEP) are enriched in acidic residues.

Belongs to the Speedy/Ringo family.

This chain is Speedy protein E16, found in Homo sapiens (Human).